Consider the following 274-residue polypeptide: Large ribosomal subunit protein uL2cz/uL2cy (274 aa).

Residues 224–274 (NPVDHPHGGGEGRAPIGRKKPTTPWGYPALGRRSRKRNKYSDNLILRRRSK) are disordered.

This sequence belongs to the universal ribosomal protein uL2 family. Part of the 50S ribosomal subunit.

The protein localises to the plastid. It is found in the chloroplast. In Panax ginseng (Korean ginseng), this protein is Large ribosomal subunit protein uL2cz/uL2cy (rpl2-A).